The sequence spans 161 residues: NAD(P)H-quinone oxidoreductase subunit I, chloroplastic (161 aa).

4Fe-4S ferredoxin-type domains lie at 55–84 and 95–124; these read GRIHFEFDKCIACEVCVRVCPIDLPIVDWK and LNYSIDFGICIFCGNCIEYCPTNCLSMTEE. 8 residues coordinate [4Fe-4S] cluster: Cys-64, Cys-67, Cys-70, Cys-74, Cys-104, Cys-107, Cys-110, and Cys-114.

The protein belongs to the complex I 23 kDa subunit family. NDH is composed of at least 16 different subunits, 5 of which are encoded in the nucleus. [4Fe-4S] cluster serves as cofactor.

The protein resides in the plastid. The protein localises to the chloroplast thylakoid membrane. It carries out the reaction a plastoquinone + NADH + (n+1) H(+)(in) = a plastoquinol + NAD(+) + n H(+)(out). It catalyses the reaction a plastoquinone + NADPH + (n+1) H(+)(in) = a plastoquinol + NADP(+) + n H(+)(out). In terms of biological role, NDH shuttles electrons from NAD(P)H:plastoquinone, via FMN and iron-sulfur (Fe-S) centers, to quinones in the photosynthetic chain and possibly in a chloroplast respiratory chain. The immediate electron acceptor for the enzyme in this species is believed to be plastoquinone. Couples the redox reaction to proton translocation, and thus conserves the redox energy in a proton gradient. The protein is NAD(P)H-quinone oxidoreductase subunit I, chloroplastic of Phaseolus vulgaris (Kidney bean).